The chain runs to 181 residues: Putative poly [ADP-ribose] polymerase-like 100L (181 aa).

Residues 1–181 (MDNLKEEETN…KIKYIIHITK (181 aa)) form the PARP catalytic domain.

The catalysed reaction is NAD(+) + (ADP-D-ribosyl)n-acceptor = nicotinamide + (ADP-D-ribosyl)n+1-acceptor + H(+).. The polypeptide is Putative poly [ADP-ribose] polymerase-like 100L (Invertebrate iridescent virus 6 (IIV-6)).